Consider the following 124-residue polypeptide: Probable cytochrome b5 1 (124 aa).

The 77-residue stretch at 3–79 folds into the Cytochrome b5 heme-binding domain; it reads VKYFEPEEIV…LEEMYIGDLK (77 aa). 2 residues coordinate heme: histidine 38 and histidine 62. The chain crosses the membrane as a helical span at residues 100 to 120; that stretch reads PPLPLLIALIVLPAIAVIVFV.

This sequence belongs to the cytochrome b5 family.

It localises to the endoplasmic reticulum membrane. It is found in the microsome membrane. Membrane bound hemoprotein which function as an electron carrier for several membrane bound oxygenases. The polypeptide is Probable cytochrome b5 1 (Schizosaccharomyces pombe (strain 972 / ATCC 24843) (Fission yeast)).